The following is a 715-amino-acid chain: DNA ligase (715 aa).

NAD(+)-binding positions include 47–51, 96–97, and Glu-128; these read DADYD and SL. The N6-AMP-lysine intermediate role is filled by Lys-130. Residues Arg-151, Glu-188, Lys-306, and Lys-330 each contribute to the NAD(+) site. Cys-435, Cys-438, Cys-453, and Cys-459 together coordinate Zn(2+). Residues 637 to 715 form the BRCT domain; it reads RRDTAVAGKT…EDEWLALIGN (79 aa).

The protein belongs to the NAD-dependent DNA ligase family. LigA subfamily. Mg(2+) serves as cofactor. The cofactor is Mn(2+).

It catalyses the reaction NAD(+) + (deoxyribonucleotide)n-3'-hydroxyl + 5'-phospho-(deoxyribonucleotide)m = (deoxyribonucleotide)n+m + AMP + beta-nicotinamide D-nucleotide.. In terms of biological role, DNA ligase that catalyzes the formation of phosphodiester linkages between 5'-phosphoryl and 3'-hydroxyl groups in double-stranded DNA using NAD as a coenzyme and as the energy source for the reaction. It is essential for DNA replication and repair of damaged DNA. This is DNA ligase from Rhodopseudomonas palustris (strain TIE-1).